A 609-amino-acid polypeptide reads, in one-letter code: UvrABC system protein C (609 aa).

The GIY-YIG domain occupies 16–94 (SSPGVYRMYD…IKQYMPRYNV (79 aa)). Positions 203-238 (LQVMTELVSKMEASALALEYEQAASYRDQIAALRRV) constitute a UVR domain.

It belongs to the UvrC family. As to quaternary structure, interacts with UvrB in an incision complex.

The protein resides in the cytoplasm. Functionally, the UvrABC repair system catalyzes the recognition and processing of DNA lesions. UvrC both incises the 5' and 3' sides of the lesion. The N-terminal half is responsible for the 3' incision and the C-terminal half is responsible for the 5' incision. In Shewanella sediminis (strain HAW-EB3), this protein is UvrABC system protein C.